Consider the following 399-residue polypeptide: Phosphoglycerate kinase (399 aa).

Substrate-binding positions include 22 to 24, Arg-37, 60 to 63, Arg-119, and Arg-152; these read DLN and HFGR. Residues Lys-202, Glu-324, and 354-357 each bind ATP; that span reads GGDT.

The protein belongs to the phosphoglycerate kinase family. As to quaternary structure, monomer.

The protein localises to the cytoplasm. The catalysed reaction is (2R)-3-phosphoglycerate + ATP = (2R)-3-phospho-glyceroyl phosphate + ADP. Its pathway is carbohydrate degradation; glycolysis; pyruvate from D-glyceraldehyde 3-phosphate: step 2/5. This chain is Phosphoglycerate kinase, found in Rhizobium meliloti (strain 1021) (Ensifer meliloti).